We begin with the raw amino-acid sequence, 206 residues long: LOB domain-containing protein 2 (206 aa).

The interval 1 to 20 (MMQRNSNNTSITSNISNNSS) is disordered. The LOB domain maps to 23 to 123 (QACASCKHQR…KSLVHNQPLI (101 aa)).

Belongs to the LOB domain-containing protein family.

This Arabidopsis thaliana (Mouse-ear cress) protein is LOB domain-containing protein 2 (LBD2).